Here is an 841-residue protein sequence, read N- to C-terminus: Probable alpha-glucuronidase A (841 aa).

An N-terminal signal peptide occupies residues 1 to 20 (MRGLNLFQLILALLLSMVAA). Asn51, Asn76, Asn85, Asn149, Asn222, Asn279, Asn310, Asn343, Asn450, Asn465, Asn527, Asn576, Asn682, Asn723, and Asn732 each carry an N-linked (GlcNAc...) asparagine glycan.

Belongs to the glycosyl hydrolase 67 family.

Its subcellular location is the secreted. It catalyses the reaction an alpha-D-glucuronoside + H2O = D-glucuronate + an alcohol. Alpha-glucuronidase involved in the hydrolysis of xylan, a major structural heterogeneous polysaccharide found in plant biomass representing the second most abundant polysaccharide in the biosphere, after cellulose. Releases 4-O-methylglucuronic acid from xylan. The sequence is that of Probable alpha-glucuronidase A (aguA) from Aspergillus niger.